Consider the following 103-residue polypeptide: BLOC-1-related complex subunit 7 (103 aa).

This sequence belongs to the BORCS7 family.

It is found in the lysosome membrane. Its function is as follows. As part of a BORC-like complex may play a role in lysosomes movement and localization at the cell periphery. Associated with the cytosolic face of lysosomes, this complex may couple lysosomes to microtubule plus-end-directed kinesin motor. The chain is BLOC-1-related complex subunit 7 from Danio rerio (Zebrafish).